Here is a 346-residue protein sequence, read N- to C-terminus: UDP-3-O-acylglucosamine N-acyltransferase (346 aa).

Catalysis depends on H253, which acts as the Proton acceptor.

Belongs to the transferase hexapeptide repeat family. LpxD subfamily. In terms of assembly, homotrimer.

It catalyses the reaction a UDP-3-O-[(3R)-3-hydroxyacyl]-alpha-D-glucosamine + a (3R)-hydroxyacyl-[ACP] = a UDP-2-N,3-O-bis[(3R)-3-hydroxyacyl]-alpha-D-glucosamine + holo-[ACP] + H(+). Its pathway is bacterial outer membrane biogenesis; LPS lipid A biosynthesis. Functionally, catalyzes the N-acylation of UDP-3-O-acylglucosamine using 3-hydroxyacyl-ACP as the acyl donor. Is involved in the biosynthesis of lipid A, a phosphorylated glycolipid that anchors the lipopolysaccharide to the outer membrane of the cell. The sequence is that of UDP-3-O-acylglucosamine N-acyltransferase from Rickettsia typhi (strain ATCC VR-144 / Wilmington).